Reading from the N-terminus, the 314-residue chain is MAGGSEKSVFLKWSWFLEWLTPDRATLKHIEDVIFQGRSRFQEIAVVRVSGEGKVLVLDGKTQSSESDEFMYHEALVHPAMILHGSPRKVLILGGGEGATLREVLKHRSVEKAVMVDIDETVVNVAREHLREWHRGAFDDPRAEVVIDDAWNYVASKAETGFDVVIADLVDPLEAGPATRLYSEEYYRMVKDVMNPGGVFVTQAVSISHLTEYHAIIRNTVARVFKHVESYGVYVPSFDSMWGFVVASDDKDPRILGDRGFFETRLSHQLQGAELRFLDYASMLHMLNIPKMYREAIAREKRYATLDNQVFLPA.

Residues 13 to 249 (WSWFLEWLTP…SMWGFVVASD (237 aa)) enclose the PABS domain. Q42 lines the S-methyl-5'-thioadenosine pocket. Positions 73 and 97 each coordinate spermidine. Residues D117 and 149 to 150 (DA) contribute to the S-methyl-5'-thioadenosine site. The Proton acceptor role is filled by D168. P177 serves as a coordination point for S-methyl-5'-thioadenosine.

It belongs to the spermidine/spermine synthase family. Homodimer or homotetramer.

It localises to the cytoplasm. The catalysed reaction is S-adenosyl 3-(methylsulfanyl)propylamine + putrescine = S-methyl-5'-thioadenosine + spermidine + H(+). Its pathway is amine and polyamine biosynthesis; spermidine biosynthesis; spermidine from putrescine: step 1/1. In terms of biological role, catalyzes the irreversible transfer of a propylamine group from the amino donor S-adenosylmethioninamine (decarboxy-AdoMet) to putrescine (1,4-diaminobutane) to yield spermidine. This chain is Polyamine aminopropyltransferase, found in Aeropyrum pernix (strain ATCC 700893 / DSM 11879 / JCM 9820 / NBRC 100138 / K1).